The chain runs to 127 residues: Two-component response regulator ORR41 (127 aa).

A Response regulatory domain is found at 7 to 125 (RVLLVEDEEI…KLGVILAKFR (119 aa)). A 4-aspartylphosphate modification is found at Asp60.

This sequence belongs to the ARR family. Type-C subfamily. In terms of processing, two-component system major event consists of a His-to-Asp phosphorelay between a sensor histidine kinase (HK) and a response regulator (RR). In plants, the His-to-Asp phosphorelay involves an additional intermediate named Histidine-containing phosphotransfer protein (HPt). This multistep phosphorelay consists of a His-Asp-His-Asp sequential transfer of a phosphate group between first a His and an Asp of the HK protein, followed by the transfer to a conserved His of the HPt protein and finally the transfer to an Asp in the receiver domain of the RR protein.

In terms of biological role, functions as a response regulator involved in His-to-Asp phosphorelay signal transduction system. Phosphorylation of the Asp residue in the receiver domain activates the ability of the protein to promote the transcription of target genes. May directly activate some type-A response regulators in response to cytokinins. This Oryza sativa subsp. japonica (Rice) protein is Two-component response regulator ORR41.